The following is a 23-amino-acid chain: Testis ecdysiotropin peptide B (23 aa).

Stimulates synthesis of ecdysteroid in the testes of larvae and pupae. The protein is Testis ecdysiotropin peptide B of Lymantria dispar (Gypsy moth).